Reading from the N-terminus, the 411-residue chain is Putative competence-damage inducible protein (411 aa).

Belongs to the CinA family.

This chain is Putative competence-damage inducible protein, found in Caldicellulosiruptor bescii (strain ATCC BAA-1888 / DSM 6725 / KCTC 15123 / Z-1320) (Anaerocellum thermophilum).